The primary structure comprises 783 residues: Endonuclease MutS2 (783 aa).

ATP is bound at residue 328–335 (GPNTGGKT). The 76-residue stretch at 708-783 (LDLRGKRYEE…GSGCTIATLG (76 aa)) folds into the Smr domain.

This sequence belongs to the DNA mismatch repair MutS family. MutS2 subfamily. As to quaternary structure, homodimer. Binds to stalled ribosomes, contacting rRNA.

Functionally, endonuclease that is involved in the suppression of homologous recombination and thus may have a key role in the control of bacterial genetic diversity. In terms of biological role, acts as a ribosome collision sensor, splitting the ribosome into its 2 subunits. Detects stalled/collided 70S ribosomes which it binds and splits by an ATP-hydrolysis driven conformational change. Acts upstream of the ribosome quality control system (RQC), a ribosome-associated complex that mediates the extraction of incompletely synthesized nascent chains from stalled ribosomes and their subsequent degradation. Probably generates substrates for RQC. The protein is Endonuclease MutS2 of Streptococcus thermophilus (strain ATCC BAA-491 / LMD-9).